Here is a 494-residue protein sequence, read N- to C-terminus: WD repeat-containing protein 37 (494 aa).

Polar residues-rich tracts occupy residues 1–13 and 22–31; these read MPTE…TARQ and SLSIRRTNSS. Positions 1 to 50 are disordered; sequence MPTESASCSTARQTKQKRKSHSLSIRRTNSSEQERTGLPRDMLEGQDSKL. Over residues 32-47 the composition is skewed to basic and acidic residues; that stretch reads EQERTGLPRDMLEGQD. WD repeat units follow at residues 154–194 and 197–236; these read GHRD…CLVK and GHVG…PTPQ. The interval 237–265 is disordered; it reads PVADTSISGEDEVECSDKDEPDLDGDVSS. The span at 245-263 shows a compositional bias: acidic residues; that stretch reads GEDEVECSDKDEPDLDGDV. WD repeat units lie at residues 279–318, 321–360, 365–403, 406–445, and 452–493; these read SHQG…LVHS, GHDQ…IHSV, GHTD…SPIA, RTDS…LARL, and GHRR…LLQE.

Forms homodimers. Interacts with PACS1. Interacts with PACS2.

It is found in the cytoplasm. It localises to the nucleus. Functionally, required for normal ER Ca2+ handling in lymphocytes. Together with PACS1, it plays an essential role in stabilizing peripheral lymphocyte populations. This chain is WD repeat-containing protein 37 (WDR37), found in Homo sapiens (Human).